A 474-amino-acid polypeptide reads, in one-letter code: Tocopherol cyclase, chloroplastic (474 aa).

The N-terminal 65 residues, 1–65 (MNLAVAAALP…TPTPQDRSLR (65 aa)), are a transit peptide targeting the chloroplast.

In terms of tissue distribution, present in all green tissues, both in bundle sheath and in mesophyll cells.

The protein localises to the plastid. Its subcellular location is the chloroplast. It carries out the reaction gamma-tocopherol = 2,3-dimethyl-6-phytylbenzene-1,4-diol. Its pathway is cofactor biosynthesis; tocopherol biosynthesis. Involved in the synthesis of tocopherols (vitamin E), which presumably protect photosynthetic complexes from oxidative stress. Catalyzes the conversion of 2,3-dimethyl-5-phytyl-1,4-hydroquinone (DMPQ) to gamma-tocopherol. This is Tocopherol cyclase, chloroplastic from Zea mays (Maize).